Reading from the N-terminus, the 655-residue chain is Macrolide export ATP-binding/permease protein MacB (655 aa).

In terms of domain architecture, ABC transporter spans 6–244 (IVLRGLRREY…VAAPTAAAAQ (239 aa)). ATP is bound at residue 42–49 (GASGSGKS). 4 consecutive transmembrane segments (helical) span residues 279–299 (FLTMLGIIIGIASVVFIVAVG), 528–548 (LTLMIAAIAVISLVVGGIGVM), 579–599 (FLIEAVMVCLIGGGLGVAVAY), and 618–638 (AGSIIAAFICSTGIGVVFGYL).

It belongs to the ABC transporter superfamily. Macrolide exporter (TC 3.A.1.122) family. As to quaternary structure, homodimer.

It is found in the cell inner membrane. Its function is as follows. Non-canonical ABC transporter that contains transmembrane domains (TMD), which form a pore in the inner membrane, and an ATP-binding domain (NBD), which is responsible for energy generation. Confers resistance against macrolides. The chain is Macrolide export ATP-binding/permease protein MacB from Rhodopseudomonas palustris (strain BisB18).